Consider the following 249-residue polypeptide: tRNA (guanine-N(1)-)-methyltransferase (249 aa).

Residues Gly113 and 133-138 each bind S-adenosyl-L-methionine; that span reads IGDFVV.

The protein belongs to the RNA methyltransferase TrmD family. As to quaternary structure, homodimer.

The protein resides in the cytoplasm. The catalysed reaction is guanosine(37) in tRNA + S-adenosyl-L-methionine = N(1)-methylguanosine(37) in tRNA + S-adenosyl-L-homocysteine + H(+). Its function is as follows. Specifically methylates guanosine-37 in various tRNAs. This chain is tRNA (guanine-N(1)-)-methyltransferase, found in Neisseria meningitidis serogroup C / serotype 2a (strain ATCC 700532 / DSM 15464 / FAM18).